A 488-amino-acid polypeptide reads, in one-letter code: Poly(3-hydroxybutyrate) depolymerase (488 aa).

Positions 1 to 27 (MVRRLWRRIAGWLAACVAILCAFPLHA) are cleaved as a signal peptide. S166 functions as the Charge relay system in the catalytic mechanism. The region spanning 346 to 428 (APTGLAVTAT…AAVSATTKSA (83 aa)) is the Fibronectin type-III domain.

Belongs to the AB hydrolase superfamily. Lipase family.

The protein localises to the secreted. The enzyme catalyses [(3R)-hydroxybutanoate](n) + H2O = [(3R)-hydroxybutanoate](n-2) + (3R)-hydroxybutanoate dimer + H(+). The catalysed reaction is [(3R)-hydroxybutanoate](n) + H2O = [(3R)-hydroxybutanoate](n-3) + (3R)-hydroxybutanoate trimer + H(+). It carries out the reaction [(3R)-hydroxybutanoate](n) + H2O = [(3R)-hydroxybutanoate](n-1) + (R)-3-hydroxybutanoate + H(+). It catalyses the reaction [(3R)-hydroxybutanoate](n) + H2O = [(3R)-hydroxybutanoate](n-5) + (3R)-hydroxybutanoate pentamer + H(+). The enzyme catalyses [(3R)-hydroxybutanoate](n) + H2O = [(3R)-hydroxybutanoate](n-4) + (3R)-hydroxybutanoate tetramer + H(+). In terms of biological role, this protein degrades water-insoluble and water-soluble PHB to monomeric D(-)-3-hydroxybutyrate. In Ralstonia pickettii (Burkholderia pickettii), this protein is Poly(3-hydroxybutyrate) depolymerase.